The following is a 619-amino-acid chain: Dihydroxy-acid dehydratase (619 aa).

D81 is a binding site for Mg(2+). Residue C122 coordinates [2Fe-2S] cluster. Mg(2+)-binding residues include D123 and K124. K124 carries the N6-carboxylysine modification. C198 provides a ligand contact to [2Fe-2S] cluster. Residue E494 participates in Mg(2+) binding. S520 acts as the Proton acceptor in catalysis.

It belongs to the IlvD/Edd family. In terms of assembly, homodimer. Requires [2Fe-2S] cluster as cofactor. The cofactor is Mg(2+).

It catalyses the reaction (2R)-2,3-dihydroxy-3-methylbutanoate = 3-methyl-2-oxobutanoate + H2O. It carries out the reaction (2R,3R)-2,3-dihydroxy-3-methylpentanoate = (S)-3-methyl-2-oxopentanoate + H2O. It participates in amino-acid biosynthesis; L-isoleucine biosynthesis; L-isoleucine from 2-oxobutanoate: step 3/4. Its pathway is amino-acid biosynthesis; L-valine biosynthesis; L-valine from pyruvate: step 3/4. In terms of biological role, functions in the biosynthesis of branched-chain amino acids. Catalyzes the dehydration of (2R,3R)-2,3-dihydroxy-3-methylpentanoate (2,3-dihydroxy-3-methylvalerate) into 2-oxo-3-methylpentanoate (2-oxo-3-methylvalerate) and of (2R)-2,3-dihydroxy-3-methylbutanoate (2,3-dihydroxyisovalerate) into 2-oxo-3-methylbutanoate (2-oxoisovalerate), the penultimate precursor to L-isoleucine and L-valine, respectively. This chain is Dihydroxy-acid dehydratase, found in Neisseria gonorrhoeae (strain ATCC 700825 / FA 1090).